The primary structure comprises 802 residues: Bifunctional purine biosynthetic protein ADE5,7 (802 aa).

The tract at residues 1-444 is GARS; the sequence is MPEITAFPQP…FRRDIAYRAL (444 aa). In terms of domain architecture, ATP-grasp spans 126–339; the sequence is KEFMARHNIP…LAEVLLACVE (214 aa). 157 to 218 is a binding site for ATP; the sequence is KPFTSGRSVI…EEYLSGPEIS (62 aa). Mg(2+)-binding residues include E307 and N309. Residues 455 to 788 form an AIRS region; that stretch reads LTYAAAGVSV…EAWVIGEVQE (334 aa).

It in the N-terminal section; belongs to the GARS family. This sequence in the C-terminal section; belongs to the AIR synthase family. Homodimer. It depends on Mg(2+) as a cofactor. Requires Mn(2+) as cofactor.

It is found in the cytoplasm. It localises to the cytosol. It carries out the reaction 2-formamido-N(1)-(5-O-phospho-beta-D-ribosyl)acetamidine + ATP = 5-amino-1-(5-phospho-beta-D-ribosyl)imidazole + ADP + phosphate + H(+). It catalyses the reaction 5-phospho-beta-D-ribosylamine + glycine + ATP = N(1)-(5-phospho-beta-D-ribosyl)glycinamide + ADP + phosphate + H(+). The protein operates within purine metabolism; IMP biosynthesis via de novo pathway; 5-amino-1-(5-phospho-D-ribosyl)imidazole from N(2)-formyl-N(1)-(5-phospho-D-ribosyl)glycinamide: step 2/2. It functions in the pathway purine metabolism; IMP biosynthesis via de novo pathway; N(1)-(5-phospho-D-ribosyl)glycinamide from 5-phospho-alpha-D-ribose 1-diphosphate: step 2/2. In terms of biological role, catalyzes the second and fifth step in the 'de novo' purine biosynthesis pathway; contains phosphoribosylamine--glycine ligase (GARS) and phosphoribosylformylglycinamidine cyclo-ligase (AIRS) activities. The polypeptide is Bifunctional purine biosynthetic protein ADE5,7 (Cryptococcus neoformans var. grubii serotype A (strain H99 / ATCC 208821 / CBS 10515 / FGSC 9487) (Filobasidiella neoformans var. grubii)).